Here is a 243-residue protein sequence, read N- to C-terminus: Venom nerve growth factor 2 (243 aa).

A signal peptide spans 1 to 18 (MSMLCYTLIIAFLIGIWA). A propeptide spanning residues 19-125 (APKSEDNVPL…TLNRNIRAKR (107 aa)) is cleaved from the precursor. Positions 47–66 (GLKTSRNTDQRHPAPKKAED) are enriched in basic and acidic residues. Residues 47–67 (GLKTSRNTDQRHPAPKKAEDQ) form a disordered region. Cystine bridges form between cysteine 139–cysteine 204 and cysteine 192–cysteine 234. Asparagine 148 carries an N-linked (GlcNAc...) asparagine glycan.

This sequence belongs to the NGF-beta family. In terms of assembly, homodimer; non-covalently linked. In terms of tissue distribution, expressed by the venom gland.

The protein localises to the secreted. Its function is as follows. Nerve growth factor is important for the development and maintenance of the sympathetic and sensory nervous systems. It stimulates division and differentiation of sympathetic and embryonic sensory neurons as well as basal forebrain cholinergic neurons in the brain. Its relevance in the snake venom is not clear. However, it has been shown to inhibit metalloproteinase-dependent proteolysis of platelet glycoprotein Ib alpha, suggesting a metalloproteinase inhibition to prevent metalloprotease autodigestion and/or protection against prey proteases. Binds a lipid between the two protein chains in the homodimer. The lipid-bound form promotes histamine relase from mouse mast cells, contrary to the lipid-free form. The polypeptide is Venom nerve growth factor 2 (Pseudonaja textilis (Eastern brown snake)).